A 147-amino-acid chain; its full sequence is Myosin regulatory light chain (147 aa).

Residue Thr1 is modified to N-acetylthreonine. 3 EF-hand domains span residues Ala2–Asn37, Glu73–Ala108, and Leu109–Leu144. Positions 15, 17, 19, 21, 26, 86, 90, 92, and 97 each coordinate Ca(2+).

This Physarum polycephalum (Slime mold) protein is Myosin regulatory light chain.